We begin with the raw amino-acid sequence, 303 residues long: Agmatinase (303 aa).

Residues His-126, Asp-149, His-151, Asp-153, Asp-230, and Asp-232 each coordinate Mn(2+).

The protein belongs to the arginase family. Agmatinase subfamily. It depends on Mn(2+) as a cofactor.

The catalysed reaction is agmatine + H2O = urea + putrescine. Its function is as follows. Catalyzes the formation of putrescine from agmatine. This chain is Agmatinase (speB), found in Blochmanniella floridana.